The sequence spans 138 residues: Acidic phospholipase A2 Cvv-E6a (138 aa).

The first 16 residues, 1 to 16, serve as a signal peptide directing secretion; the sequence is MRTLWIVAVLLLGVEG. Disulfide bonds link Cys-42-Cys-131, Cys-44-Cys-60, Cys-59-Cys-111, Cys-65-Cys-138, Cys-66-Cys-104, Cys-73-Cys-97, and Cys-91-Cys-102. Ca(2+)-binding residues include Tyr-43, Gly-45, and Gly-47. The active site involves His-63. Residue Asp-64 coordinates Ca(2+). Asp-105 is a catalytic residue.

The protein belongs to the phospholipase A2 family. Group II subfamily. D49 sub-subfamily. Ca(2+) is required as a cofactor. Expressed by the venom gland.

The protein resides in the secreted. It catalyses the reaction a 1,2-diacyl-sn-glycero-3-phosphocholine + H2O = a 1-acyl-sn-glycero-3-phosphocholine + a fatty acid + H(+). Snake venom phospholipase A2 (PLA2) that significantly inhibits ADP-induced platelet aggregation in platelet-rich plasma of human, rabbit and guinea pig. PLA2 catalyzes the calcium-dependent hydrolysis of the 2-acyl groups in 3-sn-phosphoglycerides. This chain is Acidic phospholipase A2 Cvv-E6a, found in Crotalus viridis viridis (Prairie rattlesnake).